Consider the following 98-residue polypeptide: NADH-ubiquinone oxidoreductase chain 4L (98 aa).

The next 3 membrane-spanning stretches (helical) occupy residues 1–21 (MTLI…GLLM), 29–49 (ALLC…LTIL), and 61–81 (IILL…LVTI).

This sequence belongs to the complex I subunit 4L family. As to quaternary structure, core subunit of respiratory chain NADH dehydrogenase (Complex I) which is composed of 45 different subunits.

The protein localises to the mitochondrion inner membrane. The enzyme catalyses a ubiquinone + NADH + 5 H(+)(in) = a ubiquinol + NAD(+) + 4 H(+)(out). Functionally, core subunit of the mitochondrial membrane respiratory chain NADH dehydrogenase (Complex I) which catalyzes electron transfer from NADH through the respiratory chain, using ubiquinone as an electron acceptor. Part of the enzyme membrane arm which is embedded in the lipid bilayer and involved in proton translocation. In Eubalaena australis (Southern right whale), this protein is NADH-ubiquinone oxidoreductase chain 4L (MT-ND4L).